Here is a 194-residue protein sequence, read N- to C-terminus: Molybdenum cofactor guanylyltransferase (194 aa).

GTP-binding positions include 12 to 14 (LAG), Lys-25, Asn-53, Asp-70, and Asp-100. Asp-100 contacts Mg(2+).

The protein belongs to the MobA family. In terms of assembly, monomer. It depends on Mg(2+) as a cofactor.

The protein resides in the cytoplasm. The catalysed reaction is Mo-molybdopterin + GTP + H(+) = Mo-molybdopterin guanine dinucleotide + diphosphate. Transfers a GMP moiety from GTP to Mo-molybdopterin (Mo-MPT) cofactor (Moco or molybdenum cofactor) to form Mo-molybdopterin guanine dinucleotide (Mo-MGD) cofactor. This is Molybdenum cofactor guanylyltransferase from Photobacterium profundum (strain SS9).